Reading from the N-terminus, the 343-residue chain is Ribosomal RNA small subunit methyltransferase C (343 aa).

This sequence belongs to the methyltransferase superfamily. RsmC family. Monomer.

It is found in the cytoplasm. It catalyses the reaction guanosine(1207) in 16S rRNA + S-adenosyl-L-methionine = N(2)-methylguanosine(1207) in 16S rRNA + S-adenosyl-L-homocysteine + H(+). Its function is as follows. Specifically methylates the guanine in position 1207 of 16S rRNA in the 30S particle. This Escherichia fergusonii (strain ATCC 35469 / DSM 13698 / CCUG 18766 / IAM 14443 / JCM 21226 / LMG 7866 / NBRC 102419 / NCTC 12128 / CDC 0568-73) protein is Ribosomal RNA small subunit methyltransferase C.